Reading from the N-terminus, the 108-residue chain is Urease subunit beta (108 aa).

It belongs to the urease beta subunit family. Heterotrimer of UreA (gamma), UreB (beta) and UreC (alpha) subunits. Three heterotrimers associate to form the active enzyme.

The protein resides in the cytoplasm. The catalysed reaction is urea + 2 H2O + H(+) = hydrogencarbonate + 2 NH4(+). The protein operates within nitrogen metabolism; urea degradation; CO(2) and NH(3) from urea (urease route): step 1/1. This chain is Urease subunit beta, found in Nocardia farcinica (strain IFM 10152).